The primary structure comprises 295 residues: Protease HtpX (295 aa).

Transmembrane regions (helical) follow at residues 4–24 and 41–61; these read ILLF…TLSL and SSLL…SLFI. His147 lines the Zn(2+) pocket. Glu148 is an active-site residue. His151 provides a ligand contact to Zn(2+). Transmembrane regions (helical) follow at residues 158 to 178 and 199 to 219; these read VTLA…ARII and VATI…VMWF. Glu224 contacts Zn(2+).

The protein belongs to the peptidase M48B family. It depends on Zn(2+) as a cofactor.

The protein resides in the cell inner membrane. The polypeptide is Protease HtpX (Pseudomonas putida (strain ATCC 47054 / DSM 6125 / CFBP 8728 / NCIMB 11950 / KT2440)).